Reading from the N-terminus, the 508-residue chain is ATP synthase subunit alpha, chloroplastic (508 aa).

172-179 (GDRQTGKT) provides a ligand contact to ATP.

It belongs to the ATPase alpha/beta chains family. F-type ATPases have 2 components, CF(1) - the catalytic core - and CF(0) - the membrane proton channel. CF(1) has five subunits: alpha(3), beta(3), gamma(1), delta(1), epsilon(1). CF(0) has four main subunits: a, b, b' and c.

The protein localises to the plastid. It localises to the chloroplast thylakoid membrane. It carries out the reaction ATP + H2O + 4 H(+)(in) = ADP + phosphate + 5 H(+)(out). Produces ATP from ADP in the presence of a proton gradient across the membrane. The alpha chain is a regulatory subunit. The polypeptide is ATP synthase subunit alpha, chloroplastic (Psilotum nudum (Whisk fern)).